Reading from the N-terminus, the 351-residue chain is Ribosomal RNA large subunit methyltransferase M (351 aa).

Residues Ser-186, 219–222, Asp-238, Asp-258, and Asp-274 contribute to the S-adenosyl-L-methionine site; that span reads APGG. Lys-303 functions as the Proton acceptor in the catalytic mechanism.

This sequence belongs to the class I-like SAM-binding methyltransferase superfamily. RNA methyltransferase RlmE family. RlmM subfamily. In terms of assembly, monomer.

The protein localises to the cytoplasm. It carries out the reaction cytidine(2498) in 23S rRNA + S-adenosyl-L-methionine = 2'-O-methylcytidine(2498) in 23S rRNA + S-adenosyl-L-homocysteine + H(+). Functionally, catalyzes the 2'-O-methylation at nucleotide C2498 in 23S rRNA. The chain is Ribosomal RNA large subunit methyltransferase M from Xylella fastidiosa (strain M23).